The primary structure comprises 618 residues: Glutamine--fructose-6-phosphate aminotransferase [isomerizing] (618 aa).

The active-site Nucleophile; for GATase activity is C2. Residues 2–226 form the Glutamine amidotransferase type-2 domain; it reads CGIVGYAGRN…DFETAVLTPD (225 aa). A disordered region spans residues 72–91; the sequence is WATHGRPSTENAHPHNSGGN. SIS domains follow at residues 295-434 and 467-608; these read NDDE…VRGK and CAEN…IDKP. K613 functions as the For Fru-6P isomerization activity in the catalytic mechanism.

As to quaternary structure, homodimer.

The protein localises to the cytoplasm. It catalyses the reaction D-fructose 6-phosphate + L-glutamine = D-glucosamine 6-phosphate + L-glutamate. Its function is as follows. Catalyzes the first step in hexosamine metabolism, converting fructose-6P into glucosamine-6P using glutamine as a nitrogen source. The protein is Glutamine--fructose-6-phosphate aminotransferase [isomerizing] of Methanosarcina mazei (strain ATCC BAA-159 / DSM 3647 / Goe1 / Go1 / JCM 11833 / OCM 88) (Methanosarcina frisia).